A 183-amino-acid chain; its full sequence is Transcription termination/antitermination protein NusG (183 aa).

In terms of domain architecture, KOW spans Pro-131–Val-161.

This sequence belongs to the NusG family.

Functionally, participates in transcription elongation, termination and antitermination. The polypeptide is Transcription termination/antitermination protein NusG (Pasteurella multocida (strain Pm70)).